A 115-amino-acid polypeptide reads, in one-letter code: MDTRLLCCAVICLLGAGLSNAGVMQNPRHLVRRRGQEARLRCSPMKGHSHVYWYRQLPEEGLKFMVYLQKENIIDESGMPKERFSAEFPKEGPSILRIQQVVRGDSAAYFCASSP.

Residues 1 to 21 (MDTRLLCCAVICLLGAGLSNA) form the signal peptide. One can recognise an Ig-like domain in the interval 22–115 (GVMQNPRHLV…SAAYFCASSP (94 aa)). Cysteines 42 and 111 form a disulfide.

In terms of assembly, alpha-beta TR is a heterodimer composed of an alpha and beta chain; disulfide-linked. The alpha-beta TR is associated with the transmembrane signaling CD3 coreceptor proteins to form the TR-CD3 (TcR or TCR). The assembly of alpha-beta TR heterodimers with CD3 occurs in the endoplasmic reticulum where a single alpha-beta TR heterodimer associates with one CD3D-CD3E heterodimer, one CD3G-CD3E heterodimer and one CD247 homodimer forming a stable octameric structure. CD3D-CD3E and CD3G-CD3E heterodimers preferentially associate with TR alpha and TR beta chains, respectively. The association of the CD247 homodimer is the last step of TcR assembly in the endoplasmic reticulum and is required for transport to the cell surface.

The protein resides in the cell membrane. Functionally, v region of the variable domain of T cell receptor (TR) beta chain that participates in the antigen recognition. Alpha-beta T cell receptors are antigen specific receptors which are essential to the immune response and are present on the cell surface of T lymphocytes. Recognize peptide-major histocompatibility (MH) (pMH) complexes that are displayed by antigen presenting cells (APC), a prerequisite for efficient T cell adaptive immunity against pathogens. Binding of alpha-beta TR to pMH complex initiates TR-CD3 clustering on the cell surface and intracellular activation of LCK that phosphorylates the ITAM motifs of CD3G, CD3D, CD3E and CD247 enabling the recruitment of ZAP70. In turn ZAP70 phosphorylates LAT, which recruits numerous signaling molecules to form the LAT signalosome. The LAT signalosome propagates signal branching to three major signaling pathways, the calcium, the mitogen-activated protein kinase (MAPK) kinase and the nuclear factor NF-kappa-B (NF-kB) pathways, leading to the mobilization of transcription factors that are critical for gene expression and essential for T cell growth and differentiation. The T cell repertoire is generated in the thymus, by V-(D)-J rearrangement. This repertoire is then shaped by intrathymic selection events to generate a peripheral T cell pool of self-MH restricted, non-autoaggressive T cells. Post-thymic interaction of alpha-beta TR with the pMH complexes shapes TR structural and functional avidity. The polypeptide is T cell receptor beta variable 18 (Homo sapiens (Human)).